We begin with the raw amino-acid sequence, 174 residues long: uncharacterized protein (174 aa).

This is an uncharacterized protein from Methanocaldococcus jannaschii (strain ATCC 43067 / DSM 2661 / JAL-1 / JCM 10045 / NBRC 100440) (Methanococcus jannaschii).